Here is a 557-residue protein sequence, read N- to C-terminus: Probable protein kinase UbiB (557 aa).

A Protein kinase domain is found at 121–509; sequence AFDTTPLASA…RKLQTRVVTA (389 aa). Residues 127 to 135 and K154 each bind ATP; that span reads LASASIAQV. D289 (proton acceptor) is an active-site residue. The next 2 membrane-spanning stretches (helical) occupy residues 506-526 and 535-555; these read VVTA…YGLH and VPVW…IAWL.

This sequence belongs to the ABC1 family. UbiB subfamily.

The protein resides in the cell inner membrane. Its pathway is cofactor biosynthesis; ubiquinone biosynthesis [regulation]. Is probably a protein kinase regulator of UbiI activity which is involved in aerobic coenzyme Q (ubiquinone) biosynthesis. The sequence is that of Probable protein kinase UbiB from Xanthomonas campestris pv. campestris (strain B100).